Consider the following 166-residue polypeptide: 3-isopropylmalate dehydratase small subunit 1 (166 aa).

Belongs to the LeuD family. LeuD type 2 subfamily. In terms of assembly, heterodimer of LeuC and LeuD.

It carries out the reaction (2R,3S)-3-isopropylmalate = (2S)-2-isopropylmalate. The protein operates within amino-acid biosynthesis; L-leucine biosynthesis; L-leucine from 3-methyl-2-oxobutanoate: step 2/4. Its function is as follows. Catalyzes the isomerization between 2-isopropylmalate and 3-isopropylmalate, via the formation of 2-isopropylmaleate. The sequence is that of 3-isopropylmalate dehydratase small subunit 1 (leuD1) from Thermotoga maritima (strain ATCC 43589 / DSM 3109 / JCM 10099 / NBRC 100826 / MSB8).